We begin with the raw amino-acid sequence, 821 residues long: MFNWRAIYNKILYLLLKIVVRSHIIPPKLLAEICLDIQEPMMYVLPYNSKCDLLTLRILCIQYQLPDPLKPIFIXGVRFPRYLFIDQSCHIRSDVTKQQQYGRILHNFITLYRHNSCSNIQILPVWVMFGRCPGKESYKNKKTTSIQFFCLLKKIINVIWLGRDSFIYFSPIGSIPISYIANSNYTINSIMILKLFRLGRIHFLRQKRIAIGPSLLVRKHLFEKLLASQTITKLVEDEARSKKISIKQAQQKALVIIEEIAADFSYETIRLSDRVLSWIWNMLYQGLYVCNADRVRKLAEKGHEIIYLPCHRSHMDYLLLSYILYHEGLVIPYIAAGINLNFWPAGQIFRKLGAFFIHRTFKGHQKLYSAIFREYLYQLFNGGYSVAYFLEGSRSRTGRLQAPKTGTLTITIQSMLHLGKKKPIILVPVYISYEHVIEVASYTKELYGVVKKKEGLIHMISGLRNLRNLGRGYINFGEPLPLLTWLNQQVPQWQDDINSIEGNRPNWLALTVDYLAVTIMTRINNAVAVNAMNLCSSIILASRQYSCSSIVITRTRLLSQLKCYLELLRNVPYDAEVTVPNVTPEDLFQHLITLNQFTIKNNSIIYVSSEKTALITYYRNNIQHLFILPSLLAIIIIAQPGISRKLIHQKLLSLYPLLKVELFMRFSYQELPHVIDLMITELHRQDILYEQQTKIYPVPKRMDELQLLAASGGRETLYRYAITFSLLCSYTRINRYSLEKQSIIIAQHLSKIHSIYALEFIDKTIFSTLITTLRHEGYLSDSGEIHASQAKEIYKFLSALISPEIQTSITNALYHIKTVVN.

An HXXXXD motif motif is present at residues 310 to 315 (CHRSHM).

Belongs to the GPAT/DAPAT family.

The protein localises to the cell membrane. The catalysed reaction is sn-glycerol 3-phosphate + an acyl-CoA = a 1-acyl-sn-glycero-3-phosphate + CoA. It functions in the pathway phospholipid metabolism; CDP-diacylglycerol biosynthesis; CDP-diacylglycerol from sn-glycerol 3-phosphate: step 1/3. This Baumannia cicadellinicola subsp. Homalodisca coagulata protein is Glycerol-3-phosphate acyltransferase.